A 396-amino-acid chain; its full sequence is MEKLRSYEDFIFMANMMFKTLGYDLFHTPKPWWRYLLVRGYFVLCTISNFYEASMVTTRIIEWESLAGSPSKIMRQGLHFFYMLSSQLKFITFMINRKRLLQLSHRLKELYPHKEQNQRKYEVNKYYLSCSTRNVLYVYYFVMVVMALEPLVQSCIMYLIGFGKADFTYKRIFPTRLTFDSEKPLGYVLAYVIDFTYSQFIVNVSLGTDLWMMCVSSQISMHLGYLANMLASIRPSPETEQQDCDFLASIIKRHQLMIRLQKDVNYVFGLLLASNLFTTSCLLCCMAYYTVVEGFNWEGISYMMLFASVAAQFYVVSSHGQMLIDLSTNLAKAAFESKWYEGSLRYKKEILILMAQAQRPLEISARGVIIISLDTFKILMTITYRFFAVIRQTVEK.

Residues 1–6 lie on the Cytoplasmic side of the membrane; sequence MEKLRS. A helical transmembrane segment spans residues 7-27; sequence YEDFIFMANMMFKTLGYDLFH. At 28–34 the chain is on the extracellular side; that stretch reads TPKPWWR. Residues 35–55 traverse the membrane as a helical segment; the sequence is YLLVRGYFVLCTISNFYEASM. At 56 to 70 the chain is on the cytoplasmic side; it reads VTTRIIEWESLAGSP. The chain crosses the membrane as a helical span at residues 71–91; sequence SKIMRQGLHFFYMLSSQLKFI. The Extracellular segment spans residues 92-141; it reads TFMINRKRLLQLSHRLKELYPHKEQNQRKYEVNKYYLSCSTRNVLYVYYF. A helical transmembrane segment spans residues 142-162; it reads VMVVMALEPLVQSCIMYLIGF. At 163–209 the chain is on the cytoplasmic side; the sequence is GKADFTYKRIFPTRLTFDSEKPLGYVLAYVIDFTYSQFIVNVSLGTD. The helical transmembrane segment at 210 to 230 threads the bilayer; the sequence is LWMMCVSSQISMHLGYLANML. At 231 to 266 the chain is on the extracellular side; the sequence is ASIRPSPETEQQDCDFLASIIKRHQLMIRLQKDVNY. The chain crosses the membrane as a helical span at residues 267–287; it reads VFGLLLASNLFTTSCLLCCMA. The Cytoplasmic segment spans residues 288 to 296; it reads YYTVVEGFN. A helical transmembrane segment spans residues 297–317; sequence WEGISYMMLFASVAAQFYVVS. Residues 318–396 are Extracellular-facing; that stretch reads SHGQMLIDLS…FAVIRQTVEK (79 aa).

It belongs to the insect chemoreceptor superfamily. Heteromeric odorant receptor channel (TC 1.A.69) family. Or49a subfamily. Interacts with Orco. Complexes exist early in the endomembrane system in olfactory sensory neurons (OSNs), coupling these complexes to the conserved ciliary trafficking pathway.

The protein resides in the cell membrane. In terms of biological role, odorant receptor which mediates acceptance or avoidance behavior, depending on its substrates. The odorant receptor repertoire encodes a large collection of odor stimuli that vary widely in identity, intensity, and duration. May form a complex with Orco to form odorant-sensing units, providing sensitive and prolonged odorant signaling and calcium permeability. Involved in the behavioral responses to butanol and 2-heptanone. The sequence is that of Odorant receptor 49a (Or49a) from Drosophila melanogaster (Fruit fly).